The primary structure comprises 523 residues: Cyclic di-GMP binding protein BcsE (523 aa).

The protein belongs to the BcsE family.

Its function is as follows. Required for cellulose biosynthesis. May have protease activity, but BcsA is not targeted. Binds bis-(3'-5') cyclic diguanylic acid (c-di-GMP). This is Cyclic di-GMP binding protein BcsE from Salmonella typhimurium (strain LT2 / SGSC1412 / ATCC 700720).